The chain runs to 155 residues: SsrA-binding protein (155 aa).

Belongs to the SmpB family.

The protein localises to the cytoplasm. In terms of biological role, required for rescue of stalled ribosomes mediated by trans-translation. Binds to transfer-messenger RNA (tmRNA), required for stable association of tmRNA with ribosomes. tmRNA and SmpB together mimic tRNA shape, replacing the anticodon stem-loop with SmpB. tmRNA is encoded by the ssrA gene; the 2 termini fold to resemble tRNA(Ala) and it encodes a 'tag peptide', a short internal open reading frame. During trans-translation Ala-aminoacylated tmRNA acts like a tRNA, entering the A-site of stalled ribosomes, displacing the stalled mRNA. The ribosome then switches to translate the ORF on the tmRNA; the nascent peptide is terminated with the 'tag peptide' encoded by the tmRNA and targeted for degradation. The ribosome is freed to recommence translation, which seems to be the essential function of trans-translation. The sequence is that of SsrA-binding protein from Oenococcus oeni (strain ATCC BAA-331 / PSU-1).